Here is an 809-residue protein sequence, read N- to C-terminus: Cell division control protein 48 homolog A (809 aa).

An N-acetylserine modification is found at S2. Position 41 is a phosphoserine (S41). ADP-binding positions include G210, 248-256 (GPPGSGKTL), and H387. 521-529 (GPPGCGKTL) is an ATP binding site. The interval 782–809 (AGSGATTGVADPFATSAAAAGDDDDLYN) is disordered. Over residues 791-801 (ADPFATSAAAA) the composition is skewed to low complexity.

Belongs to the AAA ATPase family. Homohexamer. Interacts with SERK1, GRF6, KAPP and SYP31, but not with KNOLLE. Component of the SERK1 signaling complex, composed of KAPP, CDC48A, GRF6 or GRF7, SERK1, SERK2, SERK3/BAK1 and BRI1. Interacts with PUX1, PUX2, PUX3, PUX4, PUX5, PUX7 and PUX11 via its N-terminus. Post-translationally, phosphorylated on at least one threonine residue and on Ser-41 by SERK1.

It localises to the nucleus. It is found in the cytoplasm. The protein resides in the cytoskeleton. The protein localises to the phragmoplast. Its subcellular location is the cell membrane. Its function is as follows. Probably functions in cell division and growth processes. Interacts with certain SNAREs as part of specialized membrane fusion events where vesicles from the same organelle fuse (homotypic fusion). The polypeptide is Cell division control protein 48 homolog A (CDC48A) (Arabidopsis thaliana (Mouse-ear cress)).